We begin with the raw amino-acid sequence, 211 residues long: Protein-L-isoaspartate O-methyltransferase (211 aa).

Ser60 is a catalytic residue.

This sequence belongs to the methyltransferase superfamily. L-isoaspartyl/D-aspartyl protein methyltransferase family.

Its subcellular location is the cytoplasm. The catalysed reaction is [protein]-L-isoaspartate + S-adenosyl-L-methionine = [protein]-L-isoaspartate alpha-methyl ester + S-adenosyl-L-homocysteine. Catalyzes the methyl esterification of L-isoaspartyl residues in peptides and proteins that result from spontaneous decomposition of normal L-aspartyl and L-asparaginyl residues. It plays a role in the repair and/or degradation of damaged proteins. This chain is Protein-L-isoaspartate O-methyltransferase, found in Pseudomonas fluorescens (strain SBW25).